The primary structure comprises 980 residues: Probable outer membrane protein PmpH (980 aa).

The N-terminal stretch at 1–24 (MPFSLRSTSFCFLACLCSYSYGLA) is a signal peptide. One can recognise an Autotransporter domain in the interval 661–980 (GELVPNSLWV…FVSLGLNRIF (320 aa)).

This sequence belongs to the PMP outer membrane protein family.

Its subcellular location is the secreted. It is found in the cell wall. The protein localises to the cell outer membrane. This Chlamydia muridarum (strain MoPn / Nigg) protein is Probable outer membrane protein PmpH (pmpH).